The following is a 176-amino-acid chain: Large ribosomal subunit protein uL6 (176 aa).

This sequence belongs to the universal ribosomal protein uL6 family. In terms of assembly, part of the 50S ribosomal subunit.

In terms of biological role, this protein binds to the 23S rRNA, and is important in its secondary structure. It is located near the subunit interface in the base of the L7/L12 stalk, and near the tRNA binding site of the peptidyltransferase center. The polypeptide is Large ribosomal subunit protein uL6 (Methanothrix thermoacetophila (strain DSM 6194 / JCM 14653 / NBRC 101360 / PT) (Methanosaeta thermophila)).